Consider the following 694-residue polypeptide: Heat shock protein HSP 90-alpha (694 aa).

A phosphothreonine; by PRKDC mark is found at T5 and T7. Residues D9–K236 are interaction with NR3C1. Position 51 (N51) interacts with ATP. 2 positions are modified to N6-acetyllysine: K58 and K84. The ATP site is built by D93, K112, and F138. Basic and acidic residues predominate over residues K228–K241. The tract at residues K228–R275 is disordered. S231 and S249 each carry phosphoserine. Residues P242–E255 are compositionally biased toward acidic residues. Over residues K256–K268 the composition is skewed to basic and acidic residues. The tract at residues D258 to A578 is interaction with NR3C1. The tract at residues I261–R582 is interaction with FNIP2 and TSC1. The tract at residues I261–D694 is interaction with FLCN and FNIP1. Y289 is subject to Phosphotyrosine. R376 is an ATP binding site. Position 419 is an N6-acetyllysine (K419). Phosphoserine is present on S429. An N6-acetyllysine modification is found at K434. At S452 the chain carries Phosphoserine. The residue at position 465 (K465) is an N6-acetyllysine. Y468 is subject to Phosphotyrosine. Residue K547 is modified to N6-acetyllysine. C560 carries the post-translational modification S-nitrosocysteine. The interval M590 to V693 is interaction with NR1D1. At S603 the chain carries Phosphoserine. Residues Q644–D694 are required for homodimerization. The segment at E662–D694 is disordered. Residues D668–E677 are compositionally biased toward low complexity. A TPR repeat-binding motif is present at residues D685–D694. Positions M690–D694 are essential for interaction with SMYD3, TSC1 and STIP1/HOP. The essential for interaction with SGTA and TTC1 stretch occupies residues E691–D694.

Belongs to the heat shock protein 90 family. As to quaternary structure, homodimer. Identified in NR3C1/GCR steroid receptor-chaperone complexes formed at least by NR3C1, HSP90AA1 and a variety of proteins containing TPR repeats such as FKBP4, FKBP5, PPID, PPP5C or STIP1. Forms a complex containing HSP90AA1, TSC1 and TSC2; TSC1 is required to recruit TCS2 to the complex. The closed form interacts (via the middle domain and TPR repeat-binding motif) with co-chaperone TSC1 (via C-terminus). Interacts with TOM34. Interacts with TERT; the interaction, together with PTGES3, is required for correct assembly and stabilization of the TERT holoenzyme complex. Interacts with CHORDC1 and DNAJC7. Interacts with STUB1 and UBE2N; may couple the chaperone and ubiquitination systems. Interacts (via TPR repeat-binding motif) with PPP5C (via TPR repeats); the interaction is direct and activates PPP5C phosphatase activity. Following LPS binding, may form a complex with CXCR4, GDF5 and HSPA8. Interacts with KSR1. Interacts with co-chaperone CDC37 (via C-terminus); the interaction inhibits HSP90AA1 ATPase activity. May interact with NWD1. Interacts with FNIP1 and FNIP2; the interaction inhibits HSP90AA1 ATPase activity. Interacts with co-chaperone AHSA1 (phosphorylated on 'Tyr-223'); the interaction activates HSP90AA1 ATPase activity and results in the dissociation of TSC1 from HSP90AA1. Interacts with FLCN in the presence of FNIP1. Interacts with HSP70, STIP1 and PTGES3. Interacts with SMYD3; this interaction enhances SMYD3 histone-lysine N-methyltransferase. Interacts with SGTA (via TPR repeats). Interacts with TTC1 (via TPR repeats). Interacts with HSF1 in an ATP-dependent manner. Interacts with MET; the interaction suppresses MET kinase activity. Interacts with ERBB2 in an ATP-dependent manner; the interaction suppresses ERBB2 kinase activity. Interacts with HIF1A, KEAP1 and RHOBTB2. Interacts with HSF1; this interaction is decreased in a IER5-dependent manner, promoting HSF1 accumulation in the nucleus, homotrimerization and DNA-binding activities. Interacts with STUB1 and SMAD3. Interacts with HSP90AB1; interaction is constitutive. Interacts with HECTD1 (via N-terminus). Interacts with NR3C1 (via domain NR LBD) and NR1D1 (via domain NR LBD). Interacts with NLPR12. Interacts with PDCL3. Interacts with TOMM70; the interaction is required for preprotein mitochondrial import. Interacts with TOMM70, IRF3 and TBK1; the interactions are direct and mediate the association of TOMM70 with IRF3 and TBK1. Forms a complex with ASL, ASS1 and NOS2; the complex regulates cell-autonomous L-arginine synthesis and citrulline recycling while channeling extracellular L-arginine to nitric oxide synthesis pathway. Post-translationally, ISGylated. In terms of processing, S-nitrosylated; negatively regulates the ATPase activity and the activation of eNOS by HSP90AA1. Ubiquitinated via 'Lys-63'-linked polyubiquitination by HECTD1. Ubiquitination promotes translocation into the cytoplasm away from the membrane and secretory pathways.

It localises to the nucleus. The protein localises to the cytoplasm. The protein resides in the melanosome. Its subcellular location is the cell membrane. It is found in the mitochondrion. It carries out the reaction ATP + H2O = ADP + phosphate + H(+). Its activity is regulated as follows. In the resting state, through the dimerization of its C-terminal domain, HSP90 forms a homodimer which is defined as the open conformation. Upon ATP-binding, the N-terminal domain undergoes significant conformational changes and comes in contact to form an active closed conformation. After HSP90 finishes its chaperoning tasks of assisting the proper folding, stabilization and activation of client proteins under the active state, ATP molecule is hydrolyzed to ADP which then dissociates from HSP90 and directs the protein back to the resting state. Co-chaperone TSC1 promotes ATP binding and inhibits HSP90AA1 ATPase activity. Binding to phosphorylated AHSA1 promotes HSP90AA1 ATPase activity. Inhibited by geldanamycin, Ganetespib (STA-9090) and SNX-2112. Molecular chaperone that promotes the maturation, structural maintenance and proper regulation of specific target proteins involved for instance in cell cycle control and signal transduction. Undergoes a functional cycle that is linked to its ATPase activity which is essential for its chaperone activity. This cycle probably induces conformational changes in the client proteins, thereby causing their activation. Interacts dynamically with various co-chaperones that modulate its substrate recognition, ATPase cycle and chaperone function. Engages with a range of client protein classes via its interaction with various co-chaperone proteins or complexes, that act as adapters, simultaneously able to interact with the specific client and the central chaperone itself. Recruitment of ATP and co-chaperone followed by client protein forms a functional chaperone. After the completion of the chaperoning process, properly folded client protein and co-chaperone leave HSP90 in an ADP-bound partially open conformation and finally, ADP is released from HSP90 which acquires an open conformation for the next cycle. Plays a critical role in mitochondrial import, delivers preproteins to the mitochondrial import receptor TOMM70. Apart from its chaperone activity, it also plays a role in the regulation of the transcription machinery. HSP90 and its co-chaperones modulate transcription at least at three different levels. In the first place, they alter the steady-state levels of certain transcription factors in response to various physiological cues. Second, they modulate the activity of certain epigenetic modifiers, such as histone deacetylases or DNA methyl transferases, and thereby respond to the change in the environment. Third, they participate in the eviction of histones from the promoter region of certain genes and thereby turn on gene expression. Binds bacterial lipopolysaccharide (LPS) and mediates LPS-induced inflammatory response, including TNF secretion by monocytes. Antagonizes STUB1-mediated inhibition of TGF-beta signaling via inhibition of STUB1-mediated SMAD3 ubiquitination and degradation. Mediates the association of TOMM70 with IRF3 or TBK1 in mitochondrial outer membrane which promotes host antiviral response. This chain is Heat shock protein HSP 90-alpha (HSP90AA1), found in Oryctolagus cuniculus (Rabbit).